The primary structure comprises 213 residues: Cytochrome b6 (213 aa).

A helical membrane pass occupies residues 30 to 50 (IFYCLGGLTLLAFLVQCVTGL). Position 33 (Cys-33) interacts with heme c. The heme b site is built by His-84 and His-98. 3 helical membrane-spanning segments follow: residues 88 to 108 (ANLM…TGSF), 114 to 134 (LNWL…FTGY), and 184 to 204 (LHVM…FIMI). Heme b is bound by residues His-185 and His-200.

This sequence belongs to the cytochrome b family. PetB subfamily. The subunits of the cytochrome bc complex are a Rieske Fe-S protein (PetC), cytochrome b6 (PetB), subunit IV (PetD), and a diheme cytochrome c (PetX). The cofactor is heme b. It depends on heme c as a cofactor.

Its subcellular location is the cell membrane. Component of the cytochrome bc complex which donates electrons to the photosynthetic reaction center. The chain is Cytochrome b6 from Heliobacterium mobile (Heliobacillus mobilis).